A 303-amino-acid polypeptide reads, in one-letter code: DnaJ homolog subfamily C member 17 (303 aa).

In terms of domain architecture, J spans 11-76; the sequence is DLYALLGIEE…AARAAYDKVR (66 aa). 2 disordered regions span residues 104-123 and 150-170; these read ERQA…SATT and IRQD…GKGT. Ser112 bears the Phosphoserine mark. Basic and acidic residues predominate over residues 150–166; the sequence is IRQDREQRLRGRTENTE. Residues 178 to 249 form the RRM domain; it reads KCKKEDESQG…NPLKVSWLEG (72 aa). Lys264 bears the N6-methyllysine mark.

In terms of tissue distribution, expressed in the thyroid gland.

It is found in the cytoplasm. It localises to the nucleus. Its function is as follows. May negatively affect PAX8-induced thyroglobulin/TG transcription. In Mus musculus (Mouse), this protein is DnaJ homolog subfamily C member 17 (Dnajc17).